We begin with the raw amino-acid sequence, 213 residues long: MKTSIAIVDYGMGNLRSVAQALKKAEPAADVAIVDTPAAIRAADRVVLPGQGAMPDCMRCLGESGLQEAVVEASRTKPLLGVCVGEQMLFDWSAEGDTKGLGLLPGKVVRFELDGRLQDDGSRFKVPQMGWNRVRQSRAHALWDGVPDDAYFYFVHSYYVMPDDPAHTVGETAYGAPFTSAVARDNIFATQFHPEKSAEVGLRLYRNFVHWKP.

Residues 4–213 form the Glutamine amidotransferase type-1 domain; it reads SIAIVDYGMG…LYRNFVHWKP (210 aa). Residue C83 is the Nucleophile of the active site. Residues H193 and E195 contribute to the active site.

As to quaternary structure, heterodimer of HisH and HisF.

It localises to the cytoplasm. It carries out the reaction 5-[(5-phospho-1-deoxy-D-ribulos-1-ylimino)methylamino]-1-(5-phospho-beta-D-ribosyl)imidazole-4-carboxamide + L-glutamine = D-erythro-1-(imidazol-4-yl)glycerol 3-phosphate + 5-amino-1-(5-phospho-beta-D-ribosyl)imidazole-4-carboxamide + L-glutamate + H(+). The enzyme catalyses L-glutamine + H2O = L-glutamate + NH4(+). Its pathway is amino-acid biosynthesis; L-histidine biosynthesis; L-histidine from 5-phospho-alpha-D-ribose 1-diphosphate: step 5/9. Functionally, IGPS catalyzes the conversion of PRFAR and glutamine to IGP, AICAR and glutamate. The HisH subunit catalyzes the hydrolysis of glutamine to glutamate and ammonia as part of the synthesis of IGP and AICAR. The resulting ammonia molecule is channeled to the active site of HisF. The polypeptide is Imidazole glycerol phosphate synthase subunit HisH (Burkholderia multivorans (strain ATCC 17616 / 249)).